Consider the following 158-residue polypeptide: Heavy metal-associated isoprenylated plant protein 23 (158 aa).

The region spanning 31-94 is the HMA domain; it reads FQTVELKVRM…KAKATGKKAE (64 aa). 2 residues coordinate a metal cation: Cys-42 and Cys-45. The residue at position 155 (Cys-155) is a Cysteine methyl ester. Cys-155 carries S-farnesyl cysteine lipidation. Residues 156-158 constitute a propeptide, removed in mature form; sequence SIM.

The protein belongs to the HIPP family. In terms of assembly, interacts with ZHD11/HB29.

Functionally, heavy-metal-binding protein. This is Heavy metal-associated isoprenylated plant protein 23 from Arabidopsis thaliana (Mouse-ear cress).